The sequence spans 251 residues: Protein TK1472 (251 aa).

Belongs to the CinA family.

The protein is Protein TK1472 of Thermococcus kodakarensis (strain ATCC BAA-918 / JCM 12380 / KOD1) (Pyrococcus kodakaraensis (strain KOD1)).